Consider the following 292-residue polypeptide: D-alanyl-D-alanine endopeptidase (292 aa).

A signal peptide spans 1–18 (MFKKALFILSLCPSFALA). Serine 45 (acyl-ester intermediate) is an active-site residue. Residue lysine 48 is the Proton acceptor of the active site. Serine 102 is an active-site residue. Position 207 (lysine 207) interacts with substrate.

It belongs to the peptidase S11 family.

It localises to the periplasm. Its function is as follows. Cell wall formation. May play a specialized role in remodeling the cell wall. Specifically hydrolyzes the DD-diaminopimelate-alanine bonds in high-molecular-mass murein sacculi. This chain is D-alanyl-D-alanine endopeptidase (pbpG), found in Haemophilus influenzae (strain ATCC 51907 / DSM 11121 / KW20 / Rd).